The primary structure comprises 852 residues: Envelope glycoprotein gp160 (852 aa).

An N-terminal signal peptide occupies residues 1–24 (MAHVNNYLLVTLLLISIYGYMGKN). Residues 25–677 (FVTVFYGIPA…FTSWMAYIRL (653 aa)) lie on the Extracellular side of the membrane. A glycan (N-linked (GlcNAc...) asparagine; by host) is linked at asparagine 37. Cysteine 44 and cysteine 57 form a disulfide bridge. N-linked (GlcNAc...) asparagine; by host glycans are attached at residues asparagine 70, asparagine 114, asparagine 148, asparagine 195, asparagine 205, asparagine 237, asparagine 247, asparagine 270, asparagine 276, asparagine 287, and asparagine 298. 4 cysteine pairs are disulfide-bonded: cysteine 101/cysteine 213, cysteine 108/cysteine 204, cysteine 113/cysteine 162, and cysteine 236/cysteine 248. The tract at residues 113 to 161 (CNKTWSSASKETTTSSASLRSSTQTLLNEDSKCIQNDSCAGIGLEEMID) is V1. A V2 region spans residues 162-204 (CQFKMTGLKRDESKQYKDTWYKQDLVCEKGTRSNESKCYIKTC). A V3 region spans residues 303-335 (CKRPGNKMVVPIRTVSGILFHSQPINKRPKQAW). A disulfide bond links cysteine 303 and cysteine 336. N-linked (GlcNAc...) asparagine; by host glycans are attached at residues asparagine 341, asparagine 364, asparagine 396, asparagine 406, asparagine 445, asparagine 461, and asparagine 464. 2 cysteine pairs are disulfide-bonded: cysteine 388–cysteine 444 and cysteine 395–cysteine 417. The V4 stretch occupies residues 395–417 (CNMTFFLNWVENRTGLKRNYASC). The tract at residues 461 to 467 (NLTNITV) is V5. Residues 510–530 (GVLVLGFLGFLATAGSAMGAA) form a fusion peptide region. Residues 573–589 (LQARVTAIEKYLKDQAQ) are immunosuppression. N-linked (GlcNAc...) asparagine; by host glycans are attached at residues asparagine 609, asparagine 618, and asparagine 634. A coiled-coil region spans residues 622 to 648 (QQWERQVRFLDANITKLLEEAQIQQEK). The tract at residues 655–676 (KLNQWDIFSNWFDFTSWMAYIR) is MPER; binding to GalCer. A helical transmembrane segment spans residues 678–698 (GLYIVIGIVVLRIAIYIIQML). At 699–852 (ARLRKGYRPV…IRQGAELALL (154 aa)) the chain is on the cytoplasmic side. The short motif at 705–708 (YRPV) is the YXXV motif; contains endocytosis signal element. The interval 713–740 (PSYTQQIPIRKDRGQPANEETEEGGGNN) is disordered. Cysteine 771 carries S-palmitoyl cysteine; by host lipidation. Positions 851-852 (LL) match the Di-leucine internalization motif motif.

As to quaternary structure, the mature envelope protein (Env) consists of a homotrimer of non-covalently associated gp120-gp41 heterodimers. The resulting complex protrudes from the virus surface as a spike. There seems to be as few as 10 spikes on the average virion. Interacts with human CD4, CCR5 and CXCR4, to form a P4HB/PDI-CD4-CXCR4-gp120 complex. Gp120 also interacts with the C-type lectins CD209/DC-SIGN and CLEC4M/DC-SIGNR (collectively referred to as DC-SIGN(R)). Gp120 and gp41 interact with GalCer. In terms of assembly, the mature envelope protein (Env) consists of a homotrimer of non-covalently associated gp120-gp41 heterodimers. The resulting complex protrudes from the virus surface as a spike. There seems to be as few as 10 spikes on the average virion. Specific enzymatic cleavages in vivo yield mature proteins. Envelope glycoproteins are synthesized as an inactive precursor that is heavily N-glycosylated and processed likely by host cell furin in the Golgi to yield the mature SU and TM proteins. The cleavage site between SU and TM requires the minimal sequence [KR]-X-[KR]-R. Post-translationally, palmitoylation of the transmembrane protein and of Env polyprotein (prior to its proteolytic cleavage) is essential for their association with host cell membrane lipid rafts. Palmitoylation is therefore required for envelope trafficking to classical lipid rafts, but not for viral replication.

The protein resides in the virion membrane. Its subcellular location is the host cell membrane. It is found in the host endosome membrane. In terms of biological role, the surface protein gp120 (SU) attaches the virus to the host lymphoid cell by binding to the primary receptor CD4. This interaction induces a structural rearrangement creating a high affinity binding site for a chemokine coreceptor like CXCR4 and/or CCR5. This peculiar 2 stage receptor-interaction strategy allows gp120 to maintain the highly conserved coreceptor-binding site in a cryptic conformation, protected from neutralizing antibodies. Since CD4 also displays a binding site for the disulfide-isomerase P4HB/PDI, a P4HB/PDI-CD4-CXCR4-gp120 complex may form. In that complex, P4HB/PDI could reach and reduce gp120 disulfide bonds, causing major conformational changes in gp120. TXN, another PDI family member could also be involved in disulfide rearrangements in Env during fusion. These changes are transmitted to the transmembrane protein gp41 and are thought to activate its fusogenic potential by unmasking its fusion peptide. Functionally, the surface protein gp120 is a ligand for CD209/DC-SIGN and CLEC4M/DC-SIGNR, which are respectively found on dendritic cells (DCs), and on endothelial cells of liver sinusoids and lymph node sinuses. These interactions allow capture of viral particles at mucosal surfaces by these cells and subsequent transmission to permissive cells. DCs are professional antigen presenting cells, critical for host immunity by inducing specific immune responses against a broad variety of pathogens. They act as sentinels in various tissues where they take up antigen, process it, and present it to T-cells following migration to lymphoid organs. HIV subverts the migration properties of dendritic cells to gain access to CD4+ T-cells in lymph nodes. Virus transmission to permissive T-cells occurs either in trans (without DCs infection, through viral capture and transmission), or in cis (following DCs productive infection, through the usual CD4-gp120 interaction), thereby inducing a robust infection. In trans infection, bound virions remain infectious over days and it is proposed that they are not degraded, but protected in non-lysosomal acidic organelles within the DCs close to the cell membrane thus contributing to the viral infectious potential during DCs' migration from the periphery to the lymphoid tissues. On arrival at lymphoid tissues, intact virions recycle back to DCs' cell surface allowing virus transmission to CD4+ T-cells. Virion capture also seems to lead to MHC-II-restricted viral antigen presentation, and probably to the activation of HIV-specific CD4+ cells. The transmembrane protein gp41 (TM) acts as a class I viral fusion protein. Under the current model, the protein has at least 3 conformational states: pre-fusion native state, pre-hairpin intermediate state, and post-fusion hairpin state. During fusion of viral and target intracellular membranes, the coiled coil regions (heptad repeats) assume a trimer-of-hairpins structure, positioning the fusion peptide in close proximity to the C-terminal region of the ectodomain. The formation of this structure appears to drive apposition and subsequent fusion of viral and target cell membranes. Complete fusion occurs in host cell endosomes and is dynamin-dependent, however some lipid transfer might occur at the plasma membrane. The virus undergoes clathrin-dependent internalization long before endosomal fusion, thus minimizing the surface exposure of conserved viral epitopes during fusion and reducing the efficacy of inhibitors targeting these epitopes. Membranes fusion leads to delivery of the nucleocapsid into the cytoplasm. Its function is as follows. The envelope glycoprotein gp160 precursor down-modulates cell surface CD4 antigen by interacting with it in the endoplasmic reticulum and blocking its transport to the cell surface. In terms of biological role, the gp120-gp41 heterodimer seems to contribute to T-cell depletion during HIV-1 infection. The envelope glycoproteins expressed on the surface of infected cells induce apoptosis through an interaction with uninfected cells expressing the receptor (CD4) and the coreceptors CXCR4 or CCR5. This type of bystander killing may be obtained by at least three distinct mechanisms. First, the interaction between the 2 cells can induce cellular fusion followed by nuclear fusion within the syncytium. Syncytia are condemned to die from apoptosis. Second, the 2 interacting cells may not fuse entirely and simply exchange plasma membrane lipids, after a sort of hemifusion process, followed by rapid death. Third, it is possible that virus-infected cells, on the point of undergoing apoptosis, fuse with CD4-expressing cells, in which case apoptosis is rapidly transmitted from one cell to the other and thus occurs in a sort of contagious fashion. Functionally, the gp120-gp41 heterodimer allows rapid transcytosis of the virus through CD4 negative cells such as simple epithelial monolayers of the intestinal, rectal and endocervical epithelial barriers. Both gp120 and gp41 specifically recognize glycosphingolipids galactosyl-ceramide (GalCer) or 3' sulfo-galactosyl-ceramide (GalS) present in the lipid rafts structures of epithelial cells. Binding to these alternative receptors allows the rapid transcytosis of the virus through the epithelial cells. This transcytotic vesicle-mediated transport of virions from the apical side to the basolateral side of the epithelial cells does not involve infection of the cells themselves. This Human immunodeficiency virus type 2 subtype B (isolate EHO) (HIV-2) protein is Envelope glycoprotein gp160 (env).